A 643-amino-acid polypeptide reads, in one-letter code: Asparagine synthetase domain-containing protein 1 (643 aa).

The For GATase activity role is filled by C2. The Glutamine amidotransferase type-2 domain occupies 2-184 (CGICCSVNFS…ASGLFRIDLK (183 aa)). Positions 285 to 601 (QFIDVLSVAV…GLTASALLPK (317 aa)) constitute an Asparagine synthetase domain.

The chain is Asparagine synthetase domain-containing protein 1 (ASNSD1) from Homo sapiens (Human).